Here is a 308-residue protein sequence, read N- to C-terminus: Growth/differentiation factor 15 (308 aa).

The first 29 residues, 1-29 (MPGQELRTVNGSQMLLVLLVLSWLPHGGA), serve as a signal peptide directing secretion. A propeptide spanning residues 30 to 194 (LSLAEASRAS…RPQAARGRRR (165 aa)) is cleaved from the precursor. Asn70 carries an N-linked (GlcNAc...) asparagine glycan. A disordered region spans residues 152 to 177 (APALHLRLSPPPSQSDQLLAESSSAR). The span at 165-177 (QSDQLLAESSSAR) shows a compositional bias: polar residues. 4 disulfides stabilise this stretch: Cys203–Cys210, Cys211–Cys274, Cys240–Cys305, and Cys244–Cys307.

The protein belongs to the TGF-beta family. As to quaternary structure, homodimer; disulfide-linked. Interacts with GFRAL and RET; ligand of GFRAL, which mediates GDF15 internalization and cellular signaling through interaction with RET via the formation of a 2:2:2 ternary complex composed of GDF15, GFRAL and RET. In terms of tissue distribution, detected in plasma (at protein level). Highly expressed in placenta, with lower levels in prostate and colon and some expression in kidney.

It localises to the secreted. Hormone produced in response to various stresses to confer information about those stresses to the brain, and trigger an aversive response, characterized by nausea, vomiting, and/or loss of appetite. The aversive response is both required to reduce continuing exposure to those stresses at the time of exposure and to promote avoidance behavior in the future. Acts by binding to its receptor, GFRAL, activating GFRAL-expressing neurons localized in the area postrema and nucleus tractus solitarius of the brainstem. It then triggers the activation of neurons localized within the parabrachial nucleus and central amygdala, which constitutes part of the 'emergency circuit' that shapes responses to stressful conditions. The GDF15-GFRAL signal induces expression of genes involved in metabolism, such as lipid metabolism in adipose tissues. Required for avoidance behavior in response to food allergens: induced downstream of mast cell activation to promote aversion and minimize harmful effects of exposure to noxious substances. In addition to suppress appetite, also promotes weight loss by enhancing energy expenditure in muscle: acts by increasing calcium futile cycling in muscle. Contributes to the effect of metformin, an anti-diabetic drug, on appetite reduction and weight loss: produced in the kidney in response to metformin treatment, thereby activating the GDF15-GFRAL response, leading to reduced appetite and weight. The contribution of GDF15 to weight loss following metformin treatment is however limited and subject to discussion. Produced in response to anticancer drugs, such as camptothecin or cisplatin, promoting nausea, vomiting and contributing to malnutrition. Overproduced in many cancers, promoting anorexia in cancer (cachexia). Responsible for the risk of nausea and vomiting during pregnancy: high levels of GDF15 during pregnancy, mostly originating from the fetus, are associated with increased nausea and vomiting. Maternal sensitivity to nausea is probably determined by pre-pregnancy exposure to GDF15, women with naturally high level of GDF15 being less susceptible to nausea than women with low levels of GDF15 before pregnancy. Promotes metabolic adaptation in response to systemic inflammation caused by bacterial and viral infections in order to promote tissue tolerance and prevent tissue damage. Required for tissue tolerance in response to myocardial infarction by acting as an inhibitor of leukocyte integring activation, thereby protecting against cardiac rupture. Inhibits growth hormone signaling on hepatocytes. The polypeptide is Growth/differentiation factor 15 (Homo sapiens (Human)).